Reading from the N-terminus, the 106-residue chain is uncharacterized protein (106 aa).

The signal sequence occupies residues 1–25; that stretch reads MSVIKKNIPAIGLCICAFFIHSAVG.

To the N-terminal of the FimA/PapA family of fimbria proteins.

This is an uncharacterized protein from Salmonella typhi.